An 81-amino-acid polypeptide reads, in one-letter code: Costars family protein ABRACL (81 aa).

This sequence belongs to the costars family.

This is Costars family protein ABRACL from Coturnix coturnix (Common quail).